Reading from the N-terminus, the 332-residue chain is Fructose-1,6-bisphosphatase class 1 (332 aa).

Residues E89, D110, L112, and D113 each contribute to the Mg(2+) site. Residues 113–116 (DGSS), N206, Y239, 257–259 (YLY), and K269 each bind substrate. A Mg(2+)-binding site is contributed by E275.

This sequence belongs to the FBPase class 1 family. Homotetramer. Mg(2+) is required as a cofactor.

The protein resides in the cytoplasm. It catalyses the reaction beta-D-fructose 1,6-bisphosphate + H2O = beta-D-fructose 6-phosphate + phosphate. It participates in carbohydrate biosynthesis; gluconeogenesis. The polypeptide is Fructose-1,6-bisphosphatase class 1 (Erwinia tasmaniensis (strain DSM 17950 / CFBP 7177 / CIP 109463 / NCPPB 4357 / Et1/99)).